The chain runs to 264 residues: tRNA (guanine-N(1)-)-methyltransferase (264 aa).

S-adenosyl-L-methionine-binding positions include G133 and 152-157 (LGDFVM). The segment covering 240–251 (QRRPDLWRKARG) has biased composition (basic and acidic residues). Residues 240 to 264 (QRRPDLWRKARGGEPPADESGEVRR) are disordered. Residues 255 to 264 (PADESGEVRR) are compositionally biased toward acidic residues.

Belongs to the RNA methyltransferase TrmD family. In terms of assembly, homodimer.

It localises to the cytoplasm. The catalysed reaction is guanosine(37) in tRNA + S-adenosyl-L-methionine = N(1)-methylguanosine(37) in tRNA + S-adenosyl-L-homocysteine + H(+). Specifically methylates guanosine-37 in various tRNAs. This Sorangium cellulosum (strain So ce56) (Polyangium cellulosum (strain So ce56)) protein is tRNA (guanine-N(1)-)-methyltransferase.